The primary structure comprises 666 residues: Secreted protein ARB_01864 (666 aa).

Residues 1–18 (MRFSTLVSLAAWAAAALA) form the signal peptide. Residues N160, N216, N342, N405, N594, N600, and N662 are each glycosylated (N-linked (GlcNAc...) asparagine). The segment at 323–353 (RGSMKPRGVPNPTRRAIKGNATTSTQPYQHP) is disordered.

The protein resides in the secreted. This chain is Secreted protein ARB_01864, found in Arthroderma benhamiae (strain ATCC MYA-4681 / CBS 112371) (Trichophyton mentagrophytes).